The chain runs to 218 residues: Superoxide dismutase [Mn] 1 (218 aa).

His-43, His-98, Asp-180, and His-184 together coordinate Mn(2+).

This sequence belongs to the iron/manganese superoxide dismutase family. In terms of assembly, homodimer. It depends on Mn(2+) as a cofactor.

The catalysed reaction is 2 superoxide + 2 H(+) = H2O2 + O2. Destroys superoxide anion radicals which are normally produced within the cells and which are toxic to biological systems. The sequence is that of Superoxide dismutase [Mn] 1 (sodA1) from Bacillus cereus (strain ATCC 14579 / DSM 31 / CCUG 7414 / JCM 2152 / NBRC 15305 / NCIMB 9373 / NCTC 2599 / NRRL B-3711).